Consider the following 720-residue polypeptide: Putative fatty acid oxidation complex trifunctional enzyme (720 aa).

Residues 1–384 (MQNEIKKVCV…SWHYGPFELL (384 aa)) are 3-hydroxyacyl-CoA dehydrogenase. Residues 453 to 720 (FVITTKMNSL…TIEKLQAIVG (268 aa)) are enoyl-CoA hydratase/isomerase.

It in the N-terminal section; belongs to the 3-hydroxyacyl-CoA dehydrogenase family. The protein in the C-terminal section; belongs to the enoyl-CoA hydratase/isomerase family.

The catalysed reaction is a (3S)-3-hydroxyacyl-CoA + NAD(+) = a 3-oxoacyl-CoA + NADH + H(+). It carries out the reaction a (3S)-3-hydroxyacyl-CoA = a (2E)-enoyl-CoA + H2O. The enzyme catalyses a 4-saturated-(3S)-3-hydroxyacyl-CoA = a (3E)-enoyl-CoA + H2O. It catalyses the reaction a (3Z)-enoyl-CoA = a 4-saturated (2E)-enoyl-CoA. The catalysed reaction is a (3E)-enoyl-CoA = a 4-saturated (2E)-enoyl-CoA. This chain is Putative fatty acid oxidation complex trifunctional enzyme, found in Rickettsia prowazekii (strain Madrid E).